The primary structure comprises 515 residues: Synaptic vesicular amine transporter (515 aa).

The Cytoplasmic segment spans residues 1–20 (MALSDLVLLRWLRDSRHSRK). Residues 21 to 41 (LILFIVFLALLLDNMLLTVVV) form a helical membrane-spanning segment. The Lumenal, vesicle portion of the chain corresponds to 42–130 (PIIPSYLYSI…EDRDLLNENV (89 aa)). 5 N-linked (GlcNAc...) asparagine glycosylation sites follow: asparagine 56, asparagine 80, asparagine 81, asparagine 89, and asparagine 111. A disulfide bond links cysteine 118 and cysteine 325. The helical transmembrane segment at 131–151 (QVGLLFASKATVQLLTNPFIG) threads the bilayer. The Cytoplasmic portion of the chain corresponds to 152–160 (LLTNRIGYP). Residues 161 to 181 (IPMFAGFCIMFISTVMFAFSS) form a helical membrane-spanning segment. The Lumenal, vesicle portion of the chain corresponds to 182–190 (SYAFLLIAR). The chain crosses the membrane as a helical span at residues 191–211 (SLQGIGSSCSSVAGMGMLASV). The Cytoplasmic segment spans residues 212-220 (YTDDEERGK). The chain crosses the membrane as a helical span at residues 221-243 (PMGIALGGLAMGVLVGPPFGSVL). Positions 229 and 233 each coordinate serotonin. Over 244-249 (YEFVGK) the chain is Lumenal, vesicle. Residues 250–272 (TAPFLVLAALVLLDGAIQLFVLQ) traverse the membrane as a helical segment. The Cytoplasmic segment spans residues 273–292 (PSRVQPESQKGTPLTTLLKD). Residues 293–312 (PYILIAAGSICFANMGIAML) form a helical membrane-spanning segment. Serotonin is bound by residues asparagine 306, isoleucine 309, glutamate 313, phenylalanine 335, and tyrosine 342. The Lumenal, vesicle segment spans residues 313–329 (EPALPIWMMETMCSRKW). A helical transmembrane segment spans residues 330 to 353 (QLGVAFLPASISYLIGTNIFGILA). Residues 354–358 (HKMGR) are Cytoplasmic-facing. A helical membrane pass occupies residues 359–379 (WLCALLGMVIVGISILCIPFA). The Lumenal, vesicle segment spans residues 380 to 390 (KNIYGLIAPNF). A helical transmembrane segment spans residues 391–411 (GVGFAIGMVDSSMMPIMGYLV). A serotonin-binding site is contributed by aspartate 400. Residues 412–415 (DLRH) are Cytoplasmic-facing. The chain crosses the membrane as a helical span at residues 416–436 (VSVYGSVYAIADVAFCMGYAI). Tyrosine 434 provides a ligand contact to serotonin. The Lumenal, vesicle segment spans residues 437-441 (GPSAG). The chain crosses the membrane as a helical span at residues 442 to 463 (GAIAKAIGFPWLMTIIGIIDIA). Residues 464–515 (FAPLCFFLRSPPAKEEKMAILMDHNCPIKRKMYTQNNVQSYPIGDDEESESD) are Cytoplasmic-facing. Residues serine 512 and serine 514 each carry the phosphoserine; by CK2 modification.

This sequence belongs to the major facilitator superfamily. Vesicular transporter family. In terms of assembly, interacts with SLC6A3. Expressed in the substantia nigra and the tuberomammillary nucleus of the posterior hypothalamus. Expressed in stomach, in particular in varicose nerve fibers and enterochromaffin-like cells in the corpus region (at protein level).

It is found in the cytoplasmic vesicle. The protein localises to the secretory vesicle. It localises to the synaptic vesicle membrane. Its subcellular location is the secretory vesicle membrane. The protein resides in the cell projection. It is found in the axon. The protein localises to the dendrite. It catalyses the reaction serotonin(in) + 2 H(+)(out) = serotonin(out) + 2 H(+)(in). It carries out the reaction dopamine(in) + 2 H(+)(out) = dopamine(out) + 2 H(+)(in). The enzyme catalyses histamine(in) + 2 H(+)(out) = histamine(out) + 2 H(+)(in). Strongly inhibited by reserpine and tetrabenazine. Also inhibited to a lesser extent by ketanserin and fenfluramine. Reserpine and ketanserin inhibit by blocking the substrate-binding pocket. Tetrabenazine traps SLC18A2/VMAT2 in an occluded conformation and its inhibition is specific to SLC18A2/VMAT2 but not SLC18A1/VMAT1. Its function is as follows. Electrogenic antiporter that exchanges one cationic monoamine with two intravesicular protons across the membrane of secretory and synaptic vesicles. Uses the electrochemical proton gradient established by the V-type proton-pump ATPase to accumulate high concentrations of monoamines inside the vesicles prior to their release via exocytosis. Transports a variety of catecholamines such as dopamine, adrenaline and noradrenaline, histamine, and indolamines such as serotonin. Regulates the transvesicular monoaminergic gradient that determines the quantal size. Mediates somatodendritic dopamine release in hippocampal neurons, likely as part of a regulated secretory pathway that integrates retrograde synaptic signals. Acts as a primary transporter for striatal dopamine loading ensuring impulse-dependent release of dopamine at the synaptic cleft. Responsible for histamine and serotonin storage and subsequent corelease from mast cell granules. This Rattus norvegicus (Rat) protein is Synaptic vesicular amine transporter (Slc18a2).